We begin with the raw amino-acid sequence, 443 residues long: Ribulose bisphosphate carboxylase large chain (443 aa).

Positions 89 and 139 each coordinate substrate. Lys-141 (proton acceptor) is an active-site residue. Substrate is bound at residue Lys-143. Residues Lys-167, Asp-169, and Glu-170 each coordinate Mg(2+). Lys-167 is modified (N6-carboxylysine). Catalysis depends on His-260, which acts as the Proton acceptor. Substrate-binding residues include Arg-261, His-293, and Ser-345.

This sequence belongs to the RuBisCO large chain family. Type I subfamily. In terms of assembly, heterohexadecamer of 8 large chains and 8 small chains; disulfide-linked. The disulfide link is formed within the large subunit homodimers. Mg(2+) is required as a cofactor. The disulfide bond which can form in the large chain dimeric partners within the hexadecamer appears to be associated with oxidative stress and protein turnover.

The protein resides in the plastid. Its subcellular location is the chloroplast. It carries out the reaction 2 (2R)-3-phosphoglycerate + 2 H(+) = D-ribulose 1,5-bisphosphate + CO2 + H2O. The enzyme catalyses D-ribulose 1,5-bisphosphate + O2 = 2-phosphoglycolate + (2R)-3-phosphoglycerate + 2 H(+). Functionally, ruBisCO catalyzes two reactions: the carboxylation of D-ribulose 1,5-bisphosphate, the primary event in carbon dioxide fixation, as well as the oxidative fragmentation of the pentose substrate in the photorespiration process. Both reactions occur simultaneously and in competition at the same active site. This is Ribulose bisphosphate carboxylase large chain from Sesamum indicum (Oriental sesame).